The chain runs to 640 residues: MRQRADVEVGPLKSGLLFSYMQNFCALQTRLRRPSRTTELDTMDFKPFLTLQHFRPQGFAGDVLAPGASYNQTWNTMASKFNGRGGNRVETGKVLEAASESLKETVPLLQLVVRARHHPLLVFLVGLFLGTIYLLYRYWDCAVGCERRPDLKGPKGLPLIGNLMWALKNRDPLSYQVYAQQKYGYGNTHTLPGLGRLIDISRPDWIEHVQKIKFSNYVKGEQFHDQMRDVLGDGIFTSDGERWKMQRKVASRIFTVSSFKAIITQTIREDCALVEQLIETYARQGTVFNLQELYFKFTLSSFVKIAFSQDIKSLSEPDRPDTFGDAFNYAQKVLDMRFVQPWWKIAERFNETGRKMRAARKIVEEFTTNIVEARRKESEAMGEKSKPESSRKDLLDLFMAYRSSDGQRLSNQQLKDTILNLMIAGRDTTAEALSWMSWHMLTKPDVYDRIRHEIDATLEEEGEQAGLEIDYDVFEQHTAKLTTFQETLRLHPSIPKNIRRALQDDVLPNGGPRVRKGDLMLYSDWAMGRNPDIWGPDACEFKPSRWTDQETGSSIKYSQFQAHFFNGGPRLCLGQKLASYEVVQLIHHIFAKFDLELIDLGPGRSAGFGKVPDYLNSLTHPMKRPLMVKATLRCCKEGTR.

The N-linked (GlcNAc...) asparagine glycan is linked to Asn71. The helical transmembrane segment at 120 to 139 threads the bilayer; sequence LLVFLVGLFLGTIYLLYRYW. Asn350 carries N-linked (GlcNAc...) asparagine glycosylation. Heme is bound at residue Cys572.

It belongs to the cytochrome P450 family. It depends on heme as a cofactor.

It localises to the membrane. It functions in the pathway secondary metabolite biosynthesis. Cytochrome P450 monooxygenase; part of the gene cluster that mediates the biosynthesis of the glycolipid biosurfactant ustilagic acid (UA). UA is a secreted cellobiose glycolipid that is toxic for many microorganisms and confers biocontrol activity to U.maydis. UA consists of 15,16-dihydroxypalmitic or 2,15,16-trihydroxypalmitic acid, which is O-glycosidically linked to cellobiose at its terminal hydroxyl group. In addition, the cellobiose moiety is acetylated and acylated with a short-chain hydroxy fatty acid. UA biosynthesis starts with omega-hydroxylation of palmitic acid catalyzed by the cytochrome P450 monooxygenase cyp1. Terminal hydroxylation of palmitic acid precedes subterminal hydroxylation catalyzed by the cytochrome P450 monooxygenase cyp2. Sequential glucosylation of the hydroxy fatty acid is probably catalyzed by the glycosyltransferase ugt1. The cellobiose lipid is further decorated by acetylation of the proximal glucose residue and by acylation with a short-chain beta-hydroxy fatty acid at the distal glucose residue. The acyltransferase uat1 may be a good candidate for catalyzing either acetylation or acylation of the cellobiose lipid. The fatty acid synthase fas2 may be involved in synthesis of the carbon backbone of the short-chain beta-hydroxy fatty acid esterified to the cellobiose disaccharide. The secreted UA consists of a mixture of both alpha-hydroxylated and non-hydroxylated glycolipids; therefore, alpha-hydroxylation of the long-chain fatty, catalyzed by the fatty acid hydroxylase ahd1, occurs late in UA biosynthesis and may be the last step before secretion. This Mycosarcoma maydis (Corn smut fungus) protein is Cytochrome P450 monooxygenase cyp1.